We begin with the raw amino-acid sequence, 209 residues long: Uracil phosphoribosyltransferase (209 aa).

5-phospho-alpha-D-ribose 1-diphosphate is bound by residues Arg79, Arg104, and Asp131–Ser139. Uracil contacts are provided by residues Ile194 and Gly199–Ala201. Asp200 is a 5-phospho-alpha-D-ribose 1-diphosphate binding site.

Belongs to the UPRTase family. Requires Mg(2+) as cofactor.

The catalysed reaction is UMP + diphosphate = 5-phospho-alpha-D-ribose 1-diphosphate + uracil. The protein operates within pyrimidine metabolism; UMP biosynthesis via salvage pathway; UMP from uracil: step 1/1. Allosterically activated by GTP. Its function is as follows. Catalyzes the conversion of uracil and 5-phospho-alpha-D-ribose 1-diphosphate (PRPP) to UMP and diphosphate. The sequence is that of Uracil phosphoribosyltransferase from Lactiplantibacillus plantarum (strain ATCC BAA-793 / NCIMB 8826 / WCFS1) (Lactobacillus plantarum).